A 383-amino-acid polypeptide reads, in one-letter code: UDP-N-acetylglucosamine 2-epimerase (383 aa).

It belongs to the UDP-N-acetylglucosamine 2-epimerase family.

The catalysed reaction is UDP-N-acetyl-alpha-D-glucosamine = UDP-N-acetyl-alpha-D-mannosamine. Its pathway is capsule biogenesis; capsule polysaccharide biosynthesis. Its function is as follows. Non-hydrolyzing C2-epimerase involved in the biosynthesis of capsular polysaccharides. Catalyzes the C2 epimerization of UDP-N-acetylglucosamine (UDP-GlcNAc) to form UDP-N-acetylmannosamine (UDP-ManNAc). The sequence is that of UDP-N-acetylglucosamine 2-epimerase from Campylobacter jejuni.